Here is a 700-residue protein sequence, read N- to C-terminus: AP-2 complex subunit beta (700 aa).

The tract at residues 625 to 700 is disordered; that stretch reads VGNSFPPTGA…RKLSMKRPFS (76 aa). Phosphoserine is present on serine 649. Threonine 652 carries the phosphothreonine modification. Basic and acidic residues predominate over residues 653–663; it reads AMMDDYDKPAE. Phosphoserine is present on serine 683.

This sequence belongs to the adaptor complexes large subunit family. As to quaternary structure, adaptor protein complex 2 (AP-2) is a heterotetramer composed of two large adaptins (alpha-type subunit APL3 and beta-type subunit APL1), a medium chain (mu-type subunit APM4) and a small adaptin (sigma-type subunit APS2). Interacts with APS2.

The protein resides in the cell membrane. It localises to the membrane. Its subcellular location is the coated pit. Its function is as follows. Adaptins are components of the adaptor complexes which link clathrin to receptors in coated vesicles. Clathrin-associated protein complexes are believed to interact with the cytoplasmic tails of membrane proteins, leading to their selection and concentration. Beta adaptin is a subunit of the plasma membrane adaptor. The polypeptide is AP-2 complex subunit beta (APL1) (Saccharomyces cerevisiae (strain ATCC 204508 / S288c) (Baker's yeast)).